Reading from the N-terminus, the 309-residue chain is Vomeronasal type-1 receptor 52 (309 aa).

The Extracellular portion of the chain corresponds to 1 to 19 (MNKDHTLYCSVYIRNAFFS). The helical transmembrane segment at 20 to 40 (EIGIGISANSCLLLFHTFMFI) threads the bilayer. Over 41 to 49 (RGHRPRLTD) the chain is Cytoplasmic. A helical transmembrane segment spans residues 50–70 (LPIGFVALIHLVMLLLAAYIT). Topologically, residues 71 to 93 (EDFFMSSGGWDDITCKLVIFLHR) are extracellular. A disulfide bridge links Cys-85 with Cys-172. Residues 94–114 (FFRSLSVCATCLLSVFQAIIL) form a helical membrane-spanning segment. At 115 to 134 (CPQSSHLAKLKQNSPHQLSY) the chain is on the cytoplasmic side. A helical membrane pass occupies residues 135–155 (FFIFLSIFYTSISSHILIAAI). At 156 to 187 (PTQNITFVNLIYITNSCSFLPLSSSMQHTFST) the chain is on the extracellular side. The N-linked (GlcNAc...) asparagine glycan is linked to Asn-159. The helical transmembrane segment at 188–208 (LLAFRNVFVIGLMGLSTCYMA) threads the bilayer. Residues 209 to 238 (TLLCRHKTRSQRLQNSKLSPKATPEQRALR) are Cytoplasmic-facing. A helical transmembrane segment spans residues 239-259 (TILMLMSFFLLMSTFDSIISY). Residues 260 to 268 (SRTILQGNP) lie on the Extracellular side of the membrane. The chain crosses the membrane as a helical span at residues 269-289 (LPFCFQILVAHSYAAVSPLLV). Topologically, residues 290 to 309 (LSNEKRITNLLISMYEKIVL) are cytoplasmic.

Belongs to the G-protein coupled receptor 1 family.

It localises to the cell membrane. In terms of biological role, putative pheromone receptor implicated in the regulation of social and reproductive behavior. The protein is Vomeronasal type-1 receptor 52 (Vmn1r52) of Mus musculus (Mouse).